A 203-amino-acid polypeptide reads, in one-letter code: Outer-membrane lipoprotein carrier protein (203 aa).

A signal peptide spans 1–21 (MKKLILIGCLMAGMNINVAWA).

It belongs to the LolA family. Monomer.

It localises to the periplasm. Functionally, participates in the translocation of lipoproteins from the inner membrane to the outer membrane. Only forms a complex with a lipoprotein if the residue after the N-terminal Cys is not an aspartate (The Asp acts as a targeting signal to indicate that the lipoprotein should stay in the inner membrane). This is Outer-membrane lipoprotein carrier protein from Photorhabdus laumondii subsp. laumondii (strain DSM 15139 / CIP 105565 / TT01) (Photorhabdus luminescens subsp. laumondii).